A 196-amino-acid chain; its full sequence is Probable malonic semialdehyde reductase RutE (196 aa).

It belongs to the nitroreductase family. HadB/RutE subfamily. Requires FMN as cofactor.

The catalysed reaction is 3-hydroxypropanoate + NADP(+) = 3-oxopropanoate + NADPH + H(+). May reduce toxic product malonic semialdehyde to 3-hydroxypropionic acid, which is excreted. This chain is Probable malonic semialdehyde reductase RutE, found in Escherichia coli O8 (strain IAI1).